The chain runs to 166 residues: Thioredoxin, mitochondrial (166 aa).

The transit peptide at 1–59 (MAQRLLLRRFLTSIISGKPSQSRWAPVASRALQTPQYSPGYLTVTPSQARSIYTTRVCS) directs the protein to the mitochondrion. Positions 61-166 (TFNIQDGPDF…LEAFLKKLIG (106 aa)) constitute a Thioredoxin domain. Catalysis depends on nucleophile residues C90 and C93. C90 and C93 form a disulfide bridge. K152 carries the N6-acetyllysine; alternate modification. At K152 the chain carries N6-succinyllysine; alternate.

This sequence belongs to the thioredoxin family. As to quaternary structure, monomer.

It localises to the mitochondrion. Functionally, important for the control of mitochondrial reactive oxygen species homeostasis, apoptosis regulation and cell viability. Is involved in various redox reactions including the reduction of protein disulfide bonds, through the reversible oxidation of its active center dithiol to a disulfide. This is Thioredoxin, mitochondrial (TXN2) from Bos taurus (Bovine).